The primary structure comprises 103 residues: Small ribosomal subunit protein uS10 (103 aa).

The protein belongs to the universal ribosomal protein uS10 family. As to quaternary structure, part of the 30S ribosomal subunit.

Its function is as follows. Involved in the binding of tRNA to the ribosomes. This Sulfurovum sp. (strain NBC37-1) protein is Small ribosomal subunit protein uS10.